The following is a 214-amino-acid chain: UPF0502 protein Pput_3252 (214 aa).

This sequence belongs to the UPF0502 family.

The protein is UPF0502 protein Pput_3252 of Pseudomonas putida (strain ATCC 700007 / DSM 6899 / JCM 31910 / BCRC 17059 / LMG 24140 / F1).